A 523-amino-acid chain; its full sequence is Cytochrome b5 reductase 4 (523 aa).

A Cytochrome b5 heme-binding domain is found at 54 to 130 (LIDVTEEELA…LKECLIGRMA (77 aa)). Heme contacts are provided by His-89 and His-112. In terms of domain architecture, CS spans 167–258 (ESHPWYDWFQ…KEPVSWKSLG (92 aa)). In terms of domain architecture, FAD-binding FR-type spans 275–387 (LYYRKCRLAS…SNPQGTFSSF (113 aa)). Residues 367–382 (ENLT…NPQG) and 394–426 (DVFL…KAKL) each bind FAD.

This sequence belongs to the flavoprotein pyridine nucleotide cytochrome reductase family. Requires FAD as cofactor.

It is found in the endoplasmic reticulum. The catalysed reaction is 2 Fe(III)-[cytochrome b5] + NADH = 2 Fe(II)-[cytochrome b5] + NAD(+) + H(+). NADH-cytochrome b5 reductase involved in endoplasmic reticulum stress response pathway. The polypeptide is Cytochrome b5 reductase 4 (cyb5r4) (Xenopus tropicalis (Western clawed frog)).